Consider the following 158-residue polypeptide: Non-secretory ribonuclease (158 aa).

Residues methionine 1–alanine 27 form the signal peptide. The active-site Proton acceptor is the histidine 42. Tyrosine 60 carries the post-translational modification 3'-nitrotyrosine. Substrate is bound at residue lysine 65–threonine 69. Residues asparagine 86, asparagine 92, and asparagine 111 are each glycosylated (N-linked (GlcNAc...) asparagine). Catalysis depends on histidine 153, which acts as the Proton donor.

It belongs to the pancreatic ribonuclease family. In terms of assembly, interacts with and forms a tight 1:1 complex with RNH1. Dimerization of two such complexes may occur.

The protein localises to the lysosome. It localises to the cytoplasmic granule. It carries out the reaction an [RNA] containing cytidine + H2O = an [RNA]-3'-cytidine-3'-phosphate + a 5'-hydroxy-ribonucleotide-3'-[RNA].. The enzyme catalyses an [RNA] containing uridine + H2O = an [RNA]-3'-uridine-3'-phosphate + a 5'-hydroxy-ribonucleotide-3'-[RNA].. Its function is as follows. This is a non-secretory ribonuclease. It is a pyrimidine specific nuclease with a slight preference for U. Cytotoxin and helminthotoxin. Possesses a wide variety of biological activities. In Callithrix jacchus (White-tufted-ear marmoset), this protein is Non-secretory ribonuclease (RNASE2).